A 207-amino-acid polypeptide reads, in one-letter code: Segregation and condensation protein B (207 aa).

It belongs to the ScpB family. In terms of assembly, homodimer. Homodimerization may be required to stabilize the binding of ScpA to the Smc head domains. Component of a cohesin-like complex composed of ScpA, ScpB and the Smc homodimer, in which ScpA and ScpB bind to the head domain of Smc. The presence of the three proteins is required for the association of the complex with DNA.

It is found in the cytoplasm. In terms of biological role, participates in chromosomal partition during cell division. May act via the formation of a condensin-like complex containing Smc and ScpA that pull DNA away from mid-cell into both cell halves. The chain is Segregation and condensation protein B from Mycoplasma genitalium (strain ATCC 33530 / DSM 19775 / NCTC 10195 / G37) (Mycoplasmoides genitalium).